Here is a 310-residue protein sequence, read N- to C-terminus: MSENRIRIATRKSPLAMWQAEFVKAELERIHPGIVVELLPMSTKGDVILDTPLAKVGGKGLFVKELEVAMLDDLADIAVHSMKDVPVDFPEGLGLEVICEREDPRDAFVSNLYKSISELPLGATVGTSSLRRQCQIRASRPDLIIKDLRGNVGTRLAKLDNGEYDAIILAAAGLIRLKLSERIASFISAEESLPANGQGAVGIECRINDERVKALLAPLEHLETRYRVLAERAMNTRLEGGCQVPIGAFAEIDGDEMTLRGLVGNPDGSEIIEGVITGPKTEATQLGVALAEELLSKGAKSILDAVYAKA.

An S-(dipyrrolylmethanemethyl)cysteine modification is found at C242.

The protein belongs to the HMBS family. As to quaternary structure, monomer. The cofactor is dipyrromethane.

It catalyses the reaction 4 porphobilinogen + H2O = hydroxymethylbilane + 4 NH4(+). Its pathway is porphyrin-containing compound metabolism; protoporphyrin-IX biosynthesis; coproporphyrinogen-III from 5-aminolevulinate: step 2/4. Tetrapolymerization of the monopyrrole PBG into the hydroxymethylbilane pre-uroporphyrinogen in several discrete steps. In Shewanella baltica (strain OS223), this protein is Porphobilinogen deaminase.